Reading from the N-terminus, the 253-residue chain is Dihydroanticapsin 7-dehydrogenase (253 aa).

9-31 (LITGGASGIGYAAVQAFLNQQAN) lines the NAD(+) pocket. Serine 139 is a binding site for substrate. The active-site Proton acceptor is the tyrosine 152.

It belongs to the short-chain dehydrogenases/reductases (SDR) family.

It catalyses the reaction L-dihydroanticapsin + NAD(+) = L-anticapsin + NADH + H(+). It participates in antibiotic biosynthesis; bacilysin biosynthesis. Its function is as follows. Part of the bacABCDEFG operon responsible for the biosynthesis of bacilysin, an irreversible inactivator of the glutaminase domain of glucosamine synthetase. Catalyzes the dehydrogenation of the C7-hydroxyl group in the 4S-tetrahydrotyrosine (4S-H4Tyr) to yield anticapsin (epoxycyclohexanonyl-Ala). The chain is Dihydroanticapsin 7-dehydrogenase from Bacillus subtilis.